Here is a 347-residue protein sequence, read N- to C-terminus: Protein RecA (347 aa).

Position 68–75 (68–75) interacts with ATP; sequence GPESSGKT.

Belongs to the RecA family.

It localises to the cytoplasm. Functionally, can catalyze the hydrolysis of ATP in the presence of single-stranded DNA, the ATP-dependent uptake of single-stranded DNA by duplex DNA, and the ATP-dependent hybridization of homologous single-stranded DNAs. It interacts with LexA causing its activation and leading to its autocatalytic cleavage. This is Protein RecA from Mycobacterium sp. (strain JLS).